The primary structure comprises 72 residues: Translation initiation factor IF-1 (72 aa).

An S1-like domain is found at 1–72 (MAKDDVIEVE…TRGRITYRYK (72 aa)). Tyr60 bears the Phosphotyrosine mark.

The protein belongs to the IF-1 family. As to quaternary structure, component of the 30S ribosomal translation pre-initiation complex which assembles on the 30S ribosome in the order IF-2 and IF-3, IF-1 and N-formylmethionyl-tRNA(fMet); mRNA recruitment can occur at any time during PIC assembly.

Its subcellular location is the cytoplasm. One of the essential components for the initiation of protein synthesis. Stabilizes the binding of IF-2 and IF-3 on the 30S subunit to which N-formylmethionyl-tRNA(fMet) subsequently binds. Helps modulate mRNA selection, yielding the 30S pre-initiation complex (PIC). Upon addition of the 50S ribosomal subunit IF-1, IF-2 and IF-3 are released leaving the mature 70S translation initiation complex. The polypeptide is Translation initiation factor IF-1 (Geobacillus kaustophilus (strain HTA426)).